A 448-amino-acid polypeptide reads, in one-letter code: RuvB-like 2 (448 aa).

Residue 73-80 (GEPGAGKT) participates in ATP binding.

This sequence belongs to the RuvB family. In terms of assembly, forms homohexameric rings. May form a dodecamer with ruvb-1 made of two stacked hexameric rings. In terms of tissue distribution, expressed in gonadal cells.

The protein resides in the cytoplasm. The protein localises to the nucleus. The enzyme catalyses ATP + H2O = ADP + phosphate + H(+). Its function is as follows. Possesses single-stranded DNA-stimulated ATPase and ATP-dependent DNA helicase (5' to 3') activity suggesting a role in nuclear processes such as recombination and transcription. May participate in several chromatin remodeling complexes that mediate the ATP-dependent exchange of histones and remodel chromatin by shifting nucleosomes. Involvement in these complexes is likely required for transcriptional activation of selected genes and DNA repair in response to DNA damage. Has a role in gonadal development. Involved in the endoplasmic reticulum (ER)-associated degradation (ERAD) pathway where it negatively regulates expression of ER stress response genes. Specifically, negatively controls the expression of ER homeostasis regulator ckb-2 in a cdc-48.1/2-dependent manner. This is RuvB-like 2 from Caenorhabditis elegans.